A 125-amino-acid polypeptide reads, in one-letter code: Small ribosomal subunit protein uS12 (125 aa).

The tract at residues Met-1–Arg-31 is disordered. Asp-89 carries the post-translational modification 3-methylthioaspartic acid. The segment at Gln-105–Ala-125 is disordered. Basic residues predominate over residues Ser-113–Ala-125.

This sequence belongs to the universal ribosomal protein uS12 family. As to quaternary structure, part of the 30S ribosomal subunit. Contacts proteins S8 and S17. May interact with IF1 in the 30S initiation complex.

Its function is as follows. With S4 and S5 plays an important role in translational accuracy. In terms of biological role, interacts with and stabilizes bases of the 16S rRNA that are involved in tRNA selection in the A site and with the mRNA backbone. Located at the interface of the 30S and 50S subunits, it traverses the body of the 30S subunit contacting proteins on the other side and probably holding the rRNA structure together. The combined cluster of proteins S8, S12 and S17 appears to hold together the shoulder and platform of the 30S subunit. The chain is Small ribosomal subunit protein uS12 from Methylibium petroleiphilum (strain ATCC BAA-1232 / LMG 22953 / PM1).